The chain runs to 157 residues: MSRRHAAEKKVIPADPIYGSVTLERFINKVMMHGKKSIARKIVYSALERFSKKIGAENVLEAFKEALENAKPLLEVRSRRVGGATYQVPVEVAAGRRDCLAMKWIINNARNKPGKCMEVGLATELIDCFNKQGATIKKREDTHRMAEANKAFAHYKW.

It belongs to the universal ribosomal protein uS7 family. As to quaternary structure, part of the 30S ribosomal subunit. Contacts proteins S9 and S11.

One of the primary rRNA binding proteins, it binds directly to 16S rRNA where it nucleates assembly of the head domain of the 30S subunit. Is located at the subunit interface close to the decoding center, probably blocks exit of the E-site tRNA. In Chlamydia caviae (strain ATCC VR-813 / DSM 19441 / 03DC25 / GPIC) (Chlamydophila caviae), this protein is Small ribosomal subunit protein uS7.